A 346-amino-acid polypeptide reads, in one-letter code: Annexin A1 (346 aa).

Position 2 is an N-acetylalanine (A2). At S5 the chain carries Phosphoserine; by TRPM7. An Isoglutamyl lysine isopeptide (Gln-Lys) (interchain with K-?) cross-link involves residue Q19. Residue Y21 is modified to Phosphotyrosine; by EGFR. S27 carries the phosphoserine; by PKC modification. S34 and S37 each carry phosphoserine. Annexin repeat units lie at residues 42 to 113 (FNPS…AMLK), 114 to 185 (TPAQ…ALAK), 197 to 269 (DLAD…TIVK), and 273 to 344 (STPA…ALCG). The residue at position 58 (K58) is an N6-acetyllysine. Ca(2+) is bound by residues G59, V60, E62, K97, L100, E105, M127, G129, G131, T132, and E134. At T136 the chain carries Phosphothreonine. Ca(2+)-binding residues include D171, G210, and R213. Residue K214 forms a Glycyl lysine isopeptide (Lys-Gly) (interchain with G-Cter in SUMO1); alternate linkage. A Glycyl lysine isopeptide (Lys-Gly) (interchain with G-Cter in SUMO2); alternate cross-link involves residue K214. Ca(2+) contacts are provided by G215, D253, E255, and L256. A Glycyl lysine isopeptide (Lys-Gly) (interchain with G-Cter in SUMO1) cross-link involves residue K257. Ca(2+) is bound by residues E261, M286, G288, and G290. N6-acetyllysine is present on K312. A disulfide bond links C324 and C343. Residues L328, E330, and T331 each contribute to the Ca(2+) site. K332 is covalently cross-linked (Glycyl lysine isopeptide (Lys-Gly) (interchain with G-Cter in SUMO1)). Ca(2+) is bound at residue E336.

This sequence belongs to the annexin family. In terms of assembly, homodimer; non-covalently linked. Homodimer; linked by transglutamylation. Homodimers linked by transglutamylation are observed in placenta, but not in other tissues. Interacts with S100A11. Heterotetramer, formed by two molecules each of S100A11 and ANXA1. Interacts with DYSF. Interacts with EGFR. Post-translationally, phosphorylated by protein kinase C, EGFR and TRPM7. Phosphorylated in response to EGF treatment. Sumoylated. In terms of processing, proteolytically cleaved by cathepsin CTSG to release the active N-terminal peptide Ac2-26. In terms of tissue distribution, detected in eosinophils. Detected in lung, placenta, spleen and thymus (at protein level).

It localises to the nucleus. The protein localises to the cytoplasm. It is found in the cell projection. Its subcellular location is the cilium. The protein resides in the basolateral cell membrane. It localises to the lateral cell membrane. The protein localises to the cell membrane. It is found in the apical cell membrane. Its subcellular location is the membrane. The protein resides in the endosome membrane. It localises to the secreted. The protein localises to the extracellular space. It is found in the early endosome. Its subcellular location is the cytoplasmic vesicle membrane. The protein resides in the extracellular exosome. It localises to the cytoplasmic vesicle. The protein localises to the secretory vesicle lumen. It is found in the phagocytic cup. Plays important roles in the innate immune response as effector of glucocorticoid-mediated responses and regulator of the inflammatory process. Has anti-inflammatory activity. Plays a role in glucocorticoid-mediated down-regulation of the early phase of the inflammatory response. Contributes to the adaptive immune response by enhancing signaling cascades that are triggered by T-cell activation, regulates differentiation and proliferation of activated T-cells. Promotes the differentiation of T-cells into Th1 cells and negatively regulates differentiation into Th2 cells. Has no effect on unstimulated T-cells. Negatively regulates hormone exocytosis via activation of the formyl peptide receptors and reorganization of the actin cytoskeleton. Has high affinity for Ca(2+) and can bind up to eight Ca(2+) ions. Displays Ca(2+)-dependent binding to phospholipid membranes. Plays a role in the formation of phagocytic cups and phagosomes. Plays a role in phagocytosis by mediating the Ca(2+)-dependent interaction between phagosomes and the actin cytoskeleton. Its function is as follows. Functions at least in part by activating the formyl peptide receptors and downstream signaling cascades. Promotes chemotaxis of granulocytes and monocytes via activation of the formyl peptide receptors. Promotes rearrangement of the actin cytoskeleton, cell polarization and cell migration. Promotes resolution of inflammation and wound healing. Acts via neutrophil N-formyl peptide receptors to enhance the release of CXCL2. The chain is Annexin A1 (Anxa1) from Rattus norvegicus (Rat).